Reading from the N-terminus, the 256-residue chain is Non-homologous end joining protein Ku 2 (256 aa).

A Ku domain is found at 13–184 (FADTDVAVKL…SLELQESPVS (172 aa)).

It belongs to the prokaryotic Ku family. As to quaternary structure, homodimer. Interacts with LigD.

Its function is as follows. With LigD forms a non-homologous end joining (NHEJ) DNA repair enzyme, which repairs dsDNA breaks with reduced fidelity. Binds linear dsDNA with 5'- and 3'- overhangs but not closed circular dsDNA nor ssDNA. Recruits and stimulates the ligase activity of LigD. This Geotalea uraniireducens (strain Rf4) (Geobacter uraniireducens) protein is Non-homologous end joining protein Ku 2.